The following is a 351-amino-acid chain: Sesquiterpene synthase 14 (351 aa).

Mg(2+)-binding residues include aspartate 87, asparagine 223, serine 227, and glutamate 231. Positions 87–91 match the DDXXD motif motif; that stretch reads DEYTD. The NSE/DTE motif motif lies at 223 to 231; it reads NDIASYNKE. (2E,6E)-farnesyl diphosphate is bound by residues arginine 312 and tyrosine 313.

It belongs to the terpene synthase family. Mg(2+) is required as a cofactor.

The enzyme catalyses (2E,6E)-farnesyl diphosphate = pentalenene + diphosphate. In terms of biological role, terpene cyclase that catalyzes the cyclization of farnesyl diphosphate (FPP) to pentalenene as a major product, as well as caryophyllene. This chain is Sesquiterpene synthase 14, found in Postia placenta (strain ATCC 44394 / Madison 698-R) (Brown rot fungus).